The sequence spans 188 residues: Photosystem I assembly protein Ycf4 (188 aa).

2 helical membrane-spanning segments follow: residues 28–48 (WATV…SSYL) and 68–88 (IAIG…WATI).

The protein belongs to the Ycf4 family.

It is found in the cellular thylakoid membrane. In terms of biological role, seems to be required for the assembly of the photosystem I complex. The polypeptide is Photosystem I assembly protein Ycf4 (Cyanothece sp. (strain PCC 7425 / ATCC 29141)).